Here is a 407-residue protein sequence, read N- to C-terminus: 1-deoxy-D-xylulose 5-phosphate reductoisomerase (407 aa).

The NADPH site is built by Thr22, Gly23, Ser24, Ile25, Gly48, Asn51, and Asn128. Residue Lys129 participates in 1-deoxy-D-xylulose 5-phosphate binding. Glu130 serves as a coordination point for NADPH. Asp152 serves as a coordination point for Mn(2+). 1-deoxy-D-xylulose 5-phosphate-binding residues include Ser153, Glu154, Ser178, and His201. Mn(2+) is bound at residue Glu154. NADPH is bound at residue Gly207. Residues Ser214, Asn219, Lys220, and Glu223 each contribute to the 1-deoxy-D-xylulose 5-phosphate site. Glu223 contributes to the Mn(2+) binding site.

It belongs to the DXR family. Mg(2+) is required as a cofactor. Mn(2+) serves as cofactor.

It carries out the reaction 2-C-methyl-D-erythritol 4-phosphate + NADP(+) = 1-deoxy-D-xylulose 5-phosphate + NADPH + H(+). It functions in the pathway isoprenoid biosynthesis; isopentenyl diphosphate biosynthesis via DXP pathway; isopentenyl diphosphate from 1-deoxy-D-xylulose 5-phosphate: step 1/6. Its function is as follows. Catalyzes the NADPH-dependent rearrangement and reduction of 1-deoxy-D-xylulose-5-phosphate (DXP) to 2-C-methyl-D-erythritol 4-phosphate (MEP). The protein is 1-deoxy-D-xylulose 5-phosphate reductoisomerase of Mycobacterium avium (strain 104).